The sequence spans 308 residues: Maspardin (308 aa).

The region spanning 87–159 (FCDGFRKLLD…NSFWLMPAFM (73 aa)) is the AB hydrolase-1 domain. S304 carries the post-translational modification Phosphoserine.

This sequence belongs to the AB hydrolase superfamily. Interacts with CD4. Interacts with ALDH16A1.

It localises to the cytoplasm. Its function is as follows. May play a role as a negative regulatory factor in CD4-dependent T-cell activation. This Pongo abelii (Sumatran orangutan) protein is Maspardin (SPG21).